The sequence spans 389 residues: PqqA peptide cyclase (389 aa).

A Radical SAM core domain is found at 19-234; that stretch reads VGLPLWLLAE…TNEYRDQLAA (216 aa). Residues C33, C37, and C40 each contribute to the [4Fe-4S] cluster site.

The protein belongs to the radical SAM superfamily. PqqE family. As to quaternary structure, interacts with PqqD. The interaction is necessary for activity of PqqE. Requires [4Fe-4S] cluster as cofactor.

It catalyses the reaction [PQQ precursor protein] + S-adenosyl-L-methionine = E-Y cross-linked-[PQQ precursor protein] + 5'-deoxyadenosine + L-methionine + H(+). It participates in cofactor biosynthesis; pyrroloquinoline quinone biosynthesis. Functionally, catalyzes the cross-linking of a glutamate residue and a tyrosine residue in the PqqA protein as part of the biosynthesis of pyrroloquinoline quinone (PQQ). This chain is PqqA peptide cyclase, found in Pseudomonas syringae pv. tomato (strain ATCC BAA-871 / DC3000).